Reading from the N-terminus, the 342-residue chain is Pre-mRNA-splicing factor 18 (342 aa).

Methionine 1 is modified (N-acetylmethionine).

The protein belongs to the PRP18 family. Heterodimer with PPIH. Interacts with PRPF4 and with the spliceosome. Part of a complex containing U4/U6 snRNPs.

Its subcellular location is the nucleus speckle. Participates in the second step of pre-mRNA splicing. The chain is Pre-mRNA-splicing factor 18 (PRPF18) from Pongo abelii (Sumatran orangutan).